The sequence spans 110 residues: MSIPQSNTSLSAVIAVDQFDPSSGGQGVYDTPLGITNPPIDELLDRVSSKYALVIYAAKRARQINDHYNQLGEGILEYVGPLVEPGLQEKPLSIAMREIHADLLEHTEGE.

This sequence belongs to the RNA polymerase subunit omega family. In terms of assembly, the RNAP catalytic core consists of 2 alpha, 1 beta, 1 beta' and 1 omega subunit. When a sigma factor is associated with the core the holoenzyme is formed, which can initiate transcription.

The enzyme catalyses RNA(n) + a ribonucleoside 5'-triphosphate = RNA(n+1) + diphosphate. Promotes RNA polymerase assembly. Latches the N- and C-terminal regions of the beta' subunit thereby facilitating its interaction with the beta and alpha subunits. The protein is DNA-directed RNA polymerase subunit omega of Mycobacterium leprae (strain Br4923).